The primary structure comprises 219 residues: Response regulator ArlR (219 aa).

Residues 3–116 (QILIVEDEQN…ELLARIRAIL (114 aa)) form the Response regulatory domain. Asp-52 is modified (4-aspartylphosphate). The ompR/PhoB-type DNA-binding region spans 122 to 219 (KDIIDVNGIT…TVRGVGYVIR (98 aa)).

Post-translationally, phosphorylated by ArlS.

The protein resides in the cytoplasm. Functionally, member of the two-component regulatory system ArlS/ArlR involved in the regulation of adhesion, autolysis, multidrug resistance and virulence. In Staphylococcus aureus (strain USA300), this protein is Response regulator ArlR (arlR).